The sequence spans 440 residues: MKPIIAIVGRPNVGKSTLFNNLVGDKIAIVDDLPGVTRDRLYRDTEWSGSEFVIVDTGGLEPRNNDFLMAKIKEQAEVAMNEADVILFVVDGKSGLNPLDEEIAYILRKKNKPVILCVNKIDNFFEQQDDVYDFYGLGFEYLVPISGEHKVNLGDMLDIVVDIIGKMDFPEEDEEVLKLAVIGKPNAGKSSLVNKLSGEERTIVSDIAGTTRDAIDTLIEYKDNKYMIIDTAGIRRKSKVEESLEYYSVLRALKAIKRADVCILMLDAKEGLTEQDKRIAGIAAEELKPIIIVMNKWDLVENKNNATMKKIKEELYAELPFLSYAPIEFVSALTGQRTTNLLEIADRIYEEYTKRISTGLLNTILKDAVLMNNPPTRKGRVIKINYATQVSVAPPKFVLFCNYPELIHFSYARYIENKFREAFGFDGSPIMISFENKSSD.

2 consecutive EngA-type G domains span residues 3 to 168 (PIIA…GKMD) and 177 to 353 (LKLA…EEYT). GTP-binding positions include 9–16 (GRPNVGKS), 56–60 (DTGGL), 119–122 (NKID), 183–190 (GKPNAGKS), 230–234 (DTAGI), and 295–298 (NKWD). The KH-like domain maps to 354-438 (KRISTGLLNT…PIMISFENKS (85 aa)).

Belongs to the TRAFAC class TrmE-Era-EngA-EngB-Septin-like GTPase superfamily. EngA (Der) GTPase family. As to quaternary structure, associates with the 50S ribosomal subunit.

Functionally, GTPase that plays an essential role in the late steps of ribosome biogenesis. The sequence is that of GTPase Der from Fusobacterium nucleatum subsp. nucleatum (strain ATCC 25586 / DSM 15643 / BCRC 10681 / CIP 101130 / JCM 8532 / KCTC 2640 / LMG 13131 / VPI 4355).